The chain runs to 274 residues: Oxidized low-density lipoprotein receptor 1 (274 aa).

Residues 1-28 (MTLDDLKSNSMKDQPDEKSNGDKAEGPR) are disordered. At 1–37 (MTLDDLKSNSMKDQPDEKSNGDKAEGPRSLSTLRWRP) the chain is on the cytoplasmic side. Residues 13-26 (DQPDEKSNGDKAEG) show a composition bias toward basic and acidic residues. A helical; Signal-anchor for type II membrane protein membrane pass occupies residues 38–60 (AALILGLLCLGLLVTVILLIIQL). Cysteine 46 is lipidated: S-palmitoyl cysteine. A neck region spans residues 61 to 150 (SQVSDLLKQQ…SGPCPQDWLW (90 aa)). The Extracellular portion of the chain corresponds to 61-274 (SQVSDLLKQQ…QKRANLLRAQ (214 aa)). The stretch at 89–142 (RQAEKSSQESQRELTEMIETLAHKLDEKSKKLMELQQQNLNLQKALEKAANFSG) forms a coiled coil. A glycan (N-linked (GlcNAc...) asparagine) is linked at asparagine 139. 3 cysteine pairs are disulfide-bonded: cysteine 144-cysteine 155, cysteine 172-cysteine 264, and cysteine 243-cysteine 256. In terms of domain architecture, C-type lectin spans 151-265 (HEENCYKFSS…CILNAFSICQ (115 aa)).

As to quaternary structure, homodimer; disulfide-linked. May form a hexamer composed of 3 homodimers. Interacts with HSP70. In terms of processing, N-glycosylated.

The protein resides in the cell membrane. It localises to the membrane raft. Its subcellular location is the secreted. Receptor that mediates the recognition, internalization and degradation of oxidatively modified low density lipoprotein (oxLDL) by vascular endothelial cells. OxLDL is a marker of atherosclerosis that induces vascular endothelial cell activation and dysfunction, resulting in pro-inflammatory responses, pro-oxidative conditions and apoptosis. Its association with oxLDL induces the activation of NF-kappa-B through an increased production of intracellular reactive oxygen and a variety of pro-atherogenic cellular responses including a reduction of nitric oxide (NO) release, monocyte adhesion and apoptosis. In addition to binding oxLDL, it acts as a receptor for the HSP70 protein involved in antigen cross-presentation to naive T-cells in dendritic cells, thereby participating in cell-mediated antigen cross-presentation. Also involved in inflammatory process, by acting as a leukocyte-adhesion molecule at the vascular interface in endotoxin-induced inflammation. Also acts as a receptor for advanced glycation end (AGE) products, activated platelets, monocytes, apoptotic cells and both Gram-negative and Gram-positive bacteria. The chain is Oxidized low-density lipoprotein receptor 1 (OLR1) from Sus scrofa (Pig).